The primary structure comprises 265 residues: Hydroxyethylthiazole kinase 2 (265 aa).

Met-39 lines the substrate pocket. ATP-binding residues include Lys-115 and Thr-168. Gly-195 is a binding site for substrate.

Belongs to the Thz kinase family. The cofactor is Mg(2+).

The enzyme catalyses 5-(2-hydroxyethyl)-4-methylthiazole + ATP = 4-methyl-5-(2-phosphooxyethyl)-thiazole + ADP + H(+). The protein operates within cofactor biosynthesis; thiamine diphosphate biosynthesis; 4-methyl-5-(2-phosphoethyl)-thiazole from 5-(2-hydroxyethyl)-4-methylthiazole: step 1/1. Its function is as follows. Catalyzes the phosphorylation of the hydroxyl group of 4-methyl-5-beta-hydroxyethylthiazole (THZ). This Clostridium botulinum (strain Langeland / NCTC 10281 / Type F) protein is Hydroxyethylthiazole kinase 2.